Reading from the N-terminus, the 788-residue chain is Cadherin-10 (788 aa).

Residues 1–22 form the signal peptide; sequence MTIYQFLRLFVLWACLPHFCCP. Positions 23–54 are excised as a propeptide; the sequence is ELTFRRTPGIQQMTAESRAPRSDGKILHRQKR. At 23 to 613 the chain is on the extracellular side; it reads ELTFRRTPGI…LLPAGLSTGA (591 aa). 5 consecutive Cadherin domains span residues 56–160, 161–269, 270–384, 385–489, and 489–603; these read WMWN…EPTF, PEEI…PPRF, PQNT…PPVF, SRSS…APQF, and FAVF…AEAL. Residue Asn256 is glycosylated (N-linked (GlcNAc...) asparagine). N-linked (GlcNAc...) asparagine glycosylation is found at Asn456 and Asn534. A helical membrane pass occupies residues 614–634; that stretch reads LIAILLCIIILLVIVVLFAAL. Residues 635–788 lie on the Cytoplasmic side of the membrane; it reads KRQRKKEPLI…YGGGESDKDA (154 aa). A Phosphoserine modification is found at Ser784.

The protein resides in the cell membrane. Functionally, cadherins are calcium-dependent cell adhesion proteins. They preferentially interact with themselves in a homophilic manner in connecting cells; cadherins may thus contribute to the sorting of heterogeneous cell types. The protein is Cadherin-10 (Cdh10) of Mus musculus (Mouse).